A 616-amino-acid polypeptide reads, in one-letter code: Chaperone protein HscA homolog (616 aa).

This sequence belongs to the heat shock protein 70 family.

In terms of biological role, chaperone involved in the maturation of iron-sulfur cluster-containing proteins. Has a low intrinsic ATPase activity which is markedly stimulated by HscB. This is Chaperone protein HscA homolog from Vibrio atlanticus (strain LGP32) (Vibrio splendidus (strain Mel32)).